Consider the following 340-residue polypeptide: KH domain-containing RNA-binding protein QKI (340 aa).

One can recognise a KH domain in the interval 87 to 153; sequence YVPVKEYPDF…WEHLNEDLHV (67 aa). The SH3-binding motif lies at 275–278; that stretch reads PPGP. Positions 323 to 329 match the Nuclear localization signal motif; it reads RVHPYQR.

It belongs to the quaking family. As to quaternary structure, homodimer; does not require RNA to homodimerize.

The protein localises to the cytoplasm. It localises to the nucleus. In terms of biological role, RNA reader protein, which recognizes and binds specific RNAs, thereby regulating RNA metabolic processes, such as pre-mRNA splicing, circular RNA (circRNA) formation, mRNA export, mRNA stability and/or translation. Involved in various cellular processes, such as mRNA storage into stress granules, apoptosis, interferon response, glial cell fate and development. Binds to the 5'-NACUAAY-N(1,20)-UAAY-3' RNA core sequence. Acts as a mRNA modification reader that specifically recognizes and binds mRNA transcripts modified by internal N(7)-methylguanine (m7G). Promotes the formation of circular RNAs (circRNAs): acts by binding to sites flanking circRNA-forming exons. CircRNAs are produced by back-splicing circularization of pre-mRNAs. Required to protect and promote stability of mRNAs which promotes oligodendrocyte differentiation. Acts as an important regulator of muscle development. In Gallus gallus (Chicken), this protein is KH domain-containing RNA-binding protein QKI.